The chain runs to 461 residues: Argininosuccinate lyase (461 aa).

2-(N(omega)-L-arginino)succinate-binding residues include serine 28, asparagine 115, and threonine 160. The active-site Proton acceptor is the histidine 161. The active-site Proton donor is the serine 282. The 2-(N(omega)-L-arginino)succinate site is built by asparagine 290, tyrosine 322, glutamine 327, and lysine 330.

This sequence belongs to the lyase 1 family. Argininosuccinate lyase subfamily. Homotetramer.

It carries out the reaction 2-(N(omega)-L-arginino)succinate = fumarate + L-arginine. The protein operates within amino-acid biosynthesis; L-arginine biosynthesis; L-arginine from L-ornithine and carbamoyl phosphate: step 3/3. The polypeptide is Argininosuccinate lyase (arg7) (Schizosaccharomyces pombe (strain 972 / ATCC 24843) (Fission yeast)).